A 437-amino-acid chain; its full sequence is Serine hydroxymethyltransferase (437 aa).

(6S)-5,6,7,8-tetrahydrofolate contacts are provided by residues L130 and 134–136; that span reads GHL. K239 bears the N6-(pyridoxal phosphate)lysine mark.

The protein belongs to the SHMT family. As to quaternary structure, homodimer. It depends on pyridoxal 5'-phosphate as a cofactor.

The protein resides in the cytoplasm. The catalysed reaction is (6R)-5,10-methylene-5,6,7,8-tetrahydrofolate + glycine + H2O = (6S)-5,6,7,8-tetrahydrofolate + L-serine. The protein operates within one-carbon metabolism; tetrahydrofolate interconversion. It participates in amino-acid biosynthesis; glycine biosynthesis; glycine from L-serine: step 1/1. In terms of biological role, catalyzes the reversible interconversion of serine and glycine with tetrahydrofolate (THF) serving as the one-carbon carrier. This reaction serves as the major source of one-carbon groups required for the biosynthesis of purines, thymidylate, methionine, and other important biomolecules. Also exhibits THF-independent aldolase activity toward beta-hydroxyamino acids, producing glycine and aldehydes, via a retro-aldol mechanism. In Bartonella tribocorum (strain CIP 105476 / IBS 506), this protein is Serine hydroxymethyltransferase.